Here is a 126-residue protein sequence, read N- to C-terminus: Glycine cleavage system H protein (126 aa).

Positions Val22–Glu104 constitute a Lipoyl-binding domain. N6-lipoyllysine is present on Lys63.

The protein belongs to the GcvH family. The glycine cleavage system is composed of four proteins: P, T, L and H. Requires (R)-lipoate as cofactor.

Its function is as follows. The glycine cleavage system catalyzes the degradation of glycine. The H protein shuttles the methylamine group of glycine from the P protein to the T protein. Is also involved in protein lipoylation via its role as an octanoyl/lipoyl carrier protein intermediate. This Staphylococcus epidermidis (strain ATCC 12228 / FDA PCI 1200) protein is Glycine cleavage system H protein.